Here is a 140-residue protein sequence, read N- to C-terminus: Class I hydrophobin C (140 aa).

An N-terminal signal peptide occupies residues 1 to 23; sequence MKFFVPAFLFAATAMALPGSGSA. 4 cysteine pairs are disulfide-bonded: Cys-41-Cys-114, Cys-49-Cys-108, Cys-50-Cys-85, and Cys-115-Cys-133.

It belongs to the fungal hydrophobin family.

Its subcellular location is the secreted. The protein localises to the cell wall. In terms of biological role, aerial growth, conidiation, and dispersal of filamentous fungi in the environment rely upon a capability of their secreting small amphipathic proteins called hydrophobins (HPBs) with low sequence identity. Class I can self-assemble into an outermost layer of rodlet bundles on aerial cell surfaces, conferring cellular hydrophobicity that supports fungal growth, development and dispersal; whereas Class II form highly ordered films at water-air interfaces through intermolecular interactions but contribute nothing to the rodlet structure. In P.expansum, hydrophobins contribute to germination, tolerance to cold stress and mycotoxins patulin and citrinin production. HfbC is involved in the virulence on apple. In Penicillium expansum (Blue mold rot fungus), this protein is Class I hydrophobin C.